We begin with the raw amino-acid sequence, 644 residues long: Macrolide export ATP-binding/permease protein MacB (644 aa).

Residues 1–268 (MNIIEIKQLN…SAIVAHKMRS (268 aa)) lie on the Cytoplasmic side of the membrane. In terms of domain architecture, ABC transporter spans 4–242 (IEIKQLNRYF…VKNPSVFKGR (239 aa)). 40–47 (GQSGSGKS) serves as a coordination point for ATP. The chain crosses the membrane as a helical span at residues 269–289 (LLTMLGIIIGITSVVSVVALG). Over 290 to 523 (NGSQQKILEN…TGTMKLLISS (234 aa)) the chain is Periplasmic. A helical membrane pass occupies residues 524 to 544 (IAFISLIVGGIGVMNIMLVSV). Topologically, residues 545-573 (TERTKEIGVRMAIGARQINILQQFLIEAV) are cytoplasmic. A helical membrane pass occupies residues 574 to 594 (LICLIGGVAGILLSVLIGVLF). The Periplasmic portion of the chain corresponds to 595-607 (NSFITDFSMDFST). The chain crosses the membrane as a helical span at residues 608–628 (ASIVTAVLFSTLIGVLFGYMP). The Cytoplasmic portion of the chain corresponds to 629–644 (AKKAAELNPITALAQE).

It belongs to the ABC transporter superfamily. Macrolide exporter (TC 3.A.1.122) family. Homodimer. Part of the tripartite efflux system MacAB-TdeA, which is composed of an inner membrane transporter, MacB, a periplasmic membrane fusion protein, MacA, and an outer membrane component, TdeA. The complex forms a large protein conduit and can translocate molecules across both the inner and outer membranes. Interacts with MacA.

Its subcellular location is the cell inner membrane. In terms of biological role, part of the tripartite efflux system MacAB-TdeA. MacB is a non-canonical ABC transporter that contains transmembrane domains (TMD), which form a pore in the inner membrane, and an ATP-binding domain (NBD), which is responsible for energy generation. Confers resistance against macrolides. In Aggregatibacter actinomycetemcomitans (Actinobacillus actinomycetemcomitans), this protein is Macrolide export ATP-binding/permease protein MacB.